Here is a 184-residue protein sequence, read N- to C-terminus: Vacuolar protein sorting-associated protein 68 (184 aa).

At Met1 the chain carries N-acetylmethionine. Ser8 carries the phosphoserine modification. Residues 26–46 (GVYLSGALYALGFWIFLDAVL) form a helical membrane-spanning segment. Asn52 carries an N-linked (GlcNAc...) asparagine glycan. 3 helical membrane-spanning segments follow: residues 56–76 (VHVT…TLIV), 115–135 (LFFG…VLII), and 150–170 (MGVN…VLWI).

It belongs to the UPF0220 family.

The protein resides in the vacuole membrane. The protein localises to the mitochondrion. Involved in vacuolar protein sorting. This is Vacuolar protein sorting-associated protein 68 (VPS68) from Saccharomyces cerevisiae (strain ATCC 204508 / S288c) (Baker's yeast).